The chain runs to 104 residues: DNA-directed RNA polymerase subunit omega (104 aa).

Positions 53 to 104 are disordered; the sequence is EIESGNVTIHPDPEGKREAVRRRIEEEKRRKEEEEKKIKEQIAKEKEDGEKI. A compositionally biased stretch (basic and acidic residues) spans 63–104; the sequence is PDPEGKREAVRRRIEEEKRRKEEEEKKIKEQIAKEKEDGEKI.

The protein belongs to the RNA polymerase subunit omega family. In terms of assembly, the RNAP catalytic core consists of 2 alpha, 1 beta, 1 beta' and 1 omega subunit. When a sigma factor is associated with the core the holoenzyme is formed, which can initiate transcription.

The catalysed reaction is RNA(n) + a ribonucleoside 5'-triphosphate = RNA(n+1) + diphosphate. Its function is as follows. Promotes RNA polymerase assembly. Latches the N- and C-terminal regions of the beta' subunit thereby facilitating its interaction with the beta and alpha subunits. In Streptococcus pneumoniae serotype 2 (strain D39 / NCTC 7466), this protein is DNA-directed RNA polymerase subunit omega.